Consider the following 129-residue polypeptide: Small ribosomal subunit protein uS12 (129 aa).

At Asp-89 the chain carries 3-methylthioaspartic acid.

The protein belongs to the universal ribosomal protein uS12 family. In terms of assembly, part of the 30S ribosomal subunit. Contacts proteins S8 and S17. May interact with IF1 in the 30S initiation complex.

With S4 and S5 plays an important role in translational accuracy. Its function is as follows. Interacts with and stabilizes bases of the 16S rRNA that are involved in tRNA selection in the A site and with the mRNA backbone. Located at the interface of the 30S and 50S subunits, it traverses the body of the 30S subunit contacting proteins on the other side and probably holding the rRNA structure together. The combined cluster of proteins S8, S12 and S17 appears to hold together the shoulder and platform of the 30S subunit. The polypeptide is Small ribosomal subunit protein uS12 (Helicobacter hepaticus (strain ATCC 51449 / 3B1)).